We begin with the raw amino-acid sequence, 733 residues long: Cell division cycle protein 48 homolog AF_1297 (733 aa).

ATP is bound by residues 223–230 (GPPGTGKT) and 496–503 (GPPGTGKT).

It belongs to the AAA ATPase family. CDC48 subfamily.

The chain is Cell division cycle protein 48 homolog AF_1297 from Archaeoglobus fulgidus (strain ATCC 49558 / DSM 4304 / JCM 9628 / NBRC 100126 / VC-16).